A 461-amino-acid chain; its full sequence is tRNA modification GTPase MnmE (461 aa).

(6S)-5-formyl-5,6,7,8-tetrahydrofolate contacts are provided by Arg-23, Glu-88, and Arg-127. Residues 223–382 (GLNTVIVGKP…VEEALVEIVY (160 aa)) form the TrmE-type G domain. A K(+)-binding site is contributed by Asn-233. GTP contacts are provided by residues 233–238 (NVGKSS), 252–258 (TEVPGTT), and 277–280 (DTAG). Mg(2+) is bound at residue Ser-237. Positions 252, 254, and 257 each coordinate K(+). Thr-258 contributes to the Mg(2+) binding site. Lys-461 is a (6S)-5-formyl-5,6,7,8-tetrahydrofolate binding site.

This sequence belongs to the TRAFAC class TrmE-Era-EngA-EngB-Septin-like GTPase superfamily. TrmE GTPase family. Homodimer. Heterotetramer of two MnmE and two MnmG subunits. Requires K(+) as cofactor.

It is found in the cytoplasm. In terms of biological role, exhibits a very high intrinsic GTPase hydrolysis rate. Involved in the addition of a carboxymethylaminomethyl (cmnm) group at the wobble position (U34) of certain tRNAs, forming tRNA-cmnm(5)s(2)U34. The polypeptide is tRNA modification GTPase MnmE (Alkaliphilus metalliredigens (strain QYMF)).